Here is a 163-residue protein sequence, read N- to C-terminus: Transcription elongation factor GreA (163 aa).

Residues 49–80 (ENAEYDAARDRQSEVERRILELERILENAEII) are a coiled coil.

It belongs to the GreA/GreB family.

In terms of biological role, necessary for efficient RNA polymerase transcription elongation past template-encoded arresting sites. The arresting sites in DNA have the property of trapping a certain fraction of elongating RNA polymerases that pass through, resulting in locked ternary complexes. Cleavage of the nascent transcript by cleavage factors such as GreA or GreB allows the resumption of elongation from the new 3'terminus. GreA releases sequences of 2 to 3 nucleotides. This chain is Transcription elongation factor GreA, found in Mycoplasmopsis agalactiae (strain NCTC 10123 / CIP 59.7 / PG2) (Mycoplasma agalactiae).